We begin with the raw amino-acid sequence, 464 residues long: Protein ABHD18 (464 aa).

Positions Met1–Gly24 are cleaved as a signal peptide. Asn341 carries N-linked (GlcNAc...) asparagine glycosylation.

It belongs to the AB hydrolase superfamily.

The protein localises to the secreted. The chain is Protein ABHD18 from Mus musculus (Mouse).